Reading from the N-terminus, the 272-residue chain is Cell division protein DivIB (272 aa).

Residues 1-21 (MRLSSHGKKTVSTSNNPVFNR) lie on the Cytoplasmic side of the membrane. Residues 22-42 (IGLFFTAAILFALFLQMLFFL) traverse the membrane as a helical segment. In terms of domain architecture, POTRA spans 43 to 115 (RPWQDIKETK…GTAIIRVNEN (73 aa)). The Extracellular segment spans residues 43–272 (RPWQDIKETK…SSSKSSNSSK (230 aa)). The tract at residues 253-272 (LSSLSSDKSKSSSKSSNSSK) is disordered.

The protein belongs to the FtsQ/DivIB family. DivIB subfamily.

The protein resides in the cell membrane. Functionally, cell division protein that may be involved in stabilizing or promoting the assembly of the division complex. This Oenococcus oeni (strain ATCC BAA-331 / PSU-1) protein is Cell division protein DivIB.